The primary structure comprises 217 residues: Adenylate kinase (217 aa).

Position 10-15 (10-15) interacts with ATP; it reads GAGKGT. An NMP region spans residues 30-59; the sequence is STGDIFRSNIKNGTELGRKAKEYIDKGLLV. AMP contacts are provided by residues threonine 31, arginine 36, 57 to 59, 85 to 88, and glutamine 92; these read LLV and GFPR. The segment at 126-163 is LID; it reads GRRVCSKCGMSYHIVYNQPKVENICDSCNGELIQRDDD. Arginine 127 is a binding site for ATP. Zn(2+) contacts are provided by cysteine 130 and cysteine 133. An ATP-binding site is contributed by 136–137; that stretch reads SY. Zn(2+)-binding residues include cysteine 150 and cysteine 153. Residues arginine 160 and arginine 171 each coordinate AMP. Residue glutamate 199 participates in ATP binding.

This sequence belongs to the adenylate kinase family. As to quaternary structure, monomer.

It is found in the cytoplasm. The enzyme catalyses AMP + ATP = 2 ADP. The protein operates within purine metabolism; AMP biosynthesis via salvage pathway; AMP from ADP: step 1/1. Functionally, catalyzes the reversible transfer of the terminal phosphate group between ATP and AMP. Plays an important role in cellular energy homeostasis and in adenine nucleotide metabolism. The sequence is that of Adenylate kinase from Acetivibrio thermocellus (strain ATCC 27405 / DSM 1237 / JCM 9322 / NBRC 103400 / NCIMB 10682 / NRRL B-4536 / VPI 7372) (Clostridium thermocellum).